Here is a 416-residue protein sequence, read N- to C-terminus: Adenylosuccinate synthetase (416 aa).

Residues Gly13–Lys19 and Gly41–Thr43 contribute to the GTP site. Asp14 (proton acceptor) is an active-site residue. 2 residues coordinate Mg(2+): Asp14 and Gly41. IMP is bound by residues Asp14–Lys17, Asn39–His42, Thr126, Arg140, Gln220, Thr235, and Arg299. Residue His42 is the Proton donor of the active site. A substrate-binding site is contributed by Thr295 to Arg301. GTP-binding positions include Arg301, Lys327–Asp329, and Ser405–Ser407.

This sequence belongs to the adenylosuccinate synthetase family. As to quaternary structure, homodimer. The cofactor is Mg(2+).

It localises to the cytoplasm. It catalyses the reaction IMP + L-aspartate + GTP = N(6)-(1,2-dicarboxyethyl)-AMP + GDP + phosphate + 2 H(+). It functions in the pathway purine metabolism; AMP biosynthesis via de novo pathway; AMP from IMP: step 1/2. In terms of biological role, plays an important role in the de novo pathway of purine nucleotide biosynthesis. Catalyzes the first committed step in the biosynthesis of AMP from IMP. The chain is Adenylosuccinate synthetase from Sulfurovum sp. (strain NBC37-1).